Consider the following 225-residue polypeptide: 7-cyano-7-deazaguanine synthase (225 aa).

10–20 serves as a coordination point for ATP; sequence LSGGIDSATAA. 4 residues coordinate Zn(2+): Cys-191, Cys-199, Cys-202, and Cys-205.

The protein belongs to the QueC family. Zn(2+) is required as a cofactor.

The enzyme catalyses 7-carboxy-7-deazaguanine + NH4(+) + ATP = 7-cyano-7-deazaguanine + ADP + phosphate + H2O + H(+). Its pathway is purine metabolism; 7-cyano-7-deazaguanine biosynthesis. Catalyzes the ATP-dependent conversion of 7-carboxy-7-deazaguanine (CDG) to 7-cyano-7-deazaguanine (preQ(0)). The sequence is that of 7-cyano-7-deazaguanine synthase from Prochlorococcus marinus (strain NATL1A).